We begin with the raw amino-acid sequence, 288 residues long: Ribosome biogenesis GTPase A (288 aa).

In terms of domain architecture, CP-type G spans 14-179; that stretch reads RRQVTEKLKL…LLDTPGILWP (166 aa). GTP contacts are provided by residues 58 to 61, 131 to 136, and G175; these read NKVD and NVGKST.

Belongs to the TRAFAC class YlqF/YawG GTPase family. MTG1 subfamily. As to quaternary structure, interacts with ctc. Interacts with the immature 50S ribosome subunit. 2 molecules of rbgA bind to one 50S subunit.

It localises to the cytoplasm. Functionally, essential protein that is required for a late step of 50S ribosomal subunit assembly. Has GTPase activity that is stimulated by interaction with the immature 50S ribosome subunit. Binds to the 23S rRNA. Required for the association of ribosomal proteins rplP and rpmA with the large subunit. In Priestia megaterium (strain DSM 319 / IMG 1521) (Bacillus megaterium), this protein is Ribosome biogenesis GTPase A.